A 588-amino-acid chain; its full sequence is Sperm-associated microtubule inner protein 4 (588 aa).

Residue threonine 219 is modified to Phosphothreonine. Residues serine 224, serine 406, serine 421, serine 427, and serine 437 each carry the phosphoserine modification. Phosphotyrosine is present on tyrosine 441. Phosphoserine occurs at positions 457 and 484. Threonine 512 carries the phosphothreonine modification. A Phosphoserine modification is found at serine 516. Lysine 543 is covalently cross-linked (Glycyl lysine isopeptide (Lys-Gly) (interchain with G-Cter in SUMO2)). The residue at position 545 (serine 545) is a Phosphoserine.

It localises to the cytoplasm. The protein localises to the cytoskeleton. It is found in the microtubule organizing center. The protein resides in the centrosome. Its subcellular location is the flagellum axoneme. Microtubule inner protein (MIP) part of the dynein-decorated doublet microtubules (DMTs) in flagellum axoneme. May serve to reinforce and thus stabilize the microtubule structure in the sperm flagella. The polypeptide is Sperm-associated microtubule inner protein 4 (Spmip4) (Rattus norvegicus (Rat)).